A 620-amino-acid chain; its full sequence is Phosphopentomutase (620 aa).

Alpha-D-glucose 1,6-bisphosphate-binding residues include arginine 71 and serine 173. The active-site Phosphoserine intermediate is serine 173. Residues serine 173, aspartate 330, aspartate 332, and aspartate 334 each contribute to the Mg(2+) site. At serine 173 the chain carries Phosphoserine. Positions 334, 335, 408, 432, and 446 each coordinate alpha-D-glucose 1,6-bisphosphate.

It belongs to the phosphohexose mutase family. As to quaternary structure, monomer. The cofactor is Mg(2+). As to expression, highly expressed in lung, spleen and thymus. Expressed at lower levels in liver, brain, kidney, skeletal muscle, testis and heart.

The protein localises to the cytoplasm. It is found in the cytosol. It catalyses the reaction alpha-D-ribose 1-phosphate = D-ribose 5-phosphate. The enzyme catalyses 2-deoxy-alpha-D-ribose 1-phosphate = 2-deoxy-D-ribose 5-phosphate. The catalysed reaction is alpha-D-glucose 1-phosphate = alpha-D-glucose 6-phosphate. It carries out the reaction O-phospho-L-seryl-[protein] + alpha-D-glucose 1-phosphate = alpha-D-glucose 1,6-bisphosphate + L-seryl-[protein]. It catalyses the reaction alpha-D-glucose 1,6-bisphosphate + L-seryl-[protein] = O-phospho-L-seryl-[protein] + alpha-D-glucose 6-phosphate. Catalyzes the conversion of the nucleoside breakdown products ribose-1-phosphate and deoxyribose-1-phosphate to the corresponding 5-phosphopentoses. Catalyzes the reversible isomerization of alpha-D-glucose 1-phosphate to alpha-D-glucose 6-phosphate but with a lower catalytic efficiency. The mechanism proceeds via the intermediate compound alpha-D-glucose 1,6-bisphosphate. In vitro, also has a low glucose 1,6-bisphosphate synthase activity which is most probably not physiologically relevant. This Mus musculus (Mouse) protein is Phosphopentomutase.